Reading from the N-terminus, the 82-residue chain is Small ribosomal subunit protein eS21 (82 aa).

The protein belongs to the eukaryotic ribosomal protein eS21 family.

The chain is Small ribosomal subunit protein eS21 (RPS21) from Cyanophora paradoxa.